A 337-amino-acid polypeptide reads, in one-letter code: Heme A synthase (337 aa).

5 helical membrane passes run 6 to 26, 87 to 107, 119 to 139, 154 to 174, and 192 to 212; these read ITKW…IGGI, FIHR…LIYF, LPYI…WYMV, LAFH…QLIK, and LIFS…GALV. A heme-binding site is contributed by His256. The next 3 helical transmembrane spans lie at 258-278, 285-305, and 308-328; these read LGSY…LTIE, IAYF…ITLL, and VPII…SIII. His316 provides a ligand contact to heme.

This sequence belongs to the COX15/CtaA family. Type 2 subfamily. As to quaternary structure, interacts with CtaB. The cofactor is heme b.

The protein resides in the cell membrane. It carries out the reaction Fe(II)-heme o + 2 A + H2O = Fe(II)-heme a + 2 AH2. It functions in the pathway porphyrin-containing compound metabolism; heme A biosynthesis; heme A from heme O: step 1/1. Catalyzes the conversion of heme O to heme A by two successive hydroxylations of the methyl group at C8. The first hydroxylation forms heme I, the second hydroxylation results in an unstable dihydroxymethyl group, which spontaneously dehydrates, resulting in the formyl group of heme A. The protein is Heme A synthase of Rickettsia akari (strain Hartford).